The chain runs to 362 residues: UDP-N-acetylglucosamine--N-acetylmuramyl-(pentapeptide) pyrophosphoryl-undecaprenol N-acetylglucosamine transferase (362 aa).

UDP-N-acetyl-alpha-D-glucosamine-binding positions include 15–17 (TGG), N127, R165, S191, I247, 266–271 (ALTVSE), and Q292.

It belongs to the glycosyltransferase 28 family. MurG subfamily.

Its subcellular location is the cell inner membrane. It catalyses the reaction di-trans,octa-cis-undecaprenyl diphospho-N-acetyl-alpha-D-muramoyl-L-alanyl-D-glutamyl-meso-2,6-diaminopimeloyl-D-alanyl-D-alanine + UDP-N-acetyl-alpha-D-glucosamine = di-trans,octa-cis-undecaprenyl diphospho-[N-acetyl-alpha-D-glucosaminyl-(1-&gt;4)]-N-acetyl-alpha-D-muramoyl-L-alanyl-D-glutamyl-meso-2,6-diaminopimeloyl-D-alanyl-D-alanine + UDP + H(+). It participates in cell wall biogenesis; peptidoglycan biosynthesis. Functionally, cell wall formation. Catalyzes the transfer of a GlcNAc subunit on undecaprenyl-pyrophosphoryl-MurNAc-pentapeptide (lipid intermediate I) to form undecaprenyl-pyrophosphoryl-MurNAc-(pentapeptide)GlcNAc (lipid intermediate II). The chain is UDP-N-acetylglucosamine--N-acetylmuramyl-(pentapeptide) pyrophosphoryl-undecaprenol N-acetylglucosamine transferase from Shewanella oneidensis (strain ATCC 700550 / JCM 31522 / CIP 106686 / LMG 19005 / NCIMB 14063 / MR-1).